Here is a 560-residue protein sequence, read N- to C-terminus: Membrane protein insertase YidC (560 aa).

6 consecutive transmembrane segments (helical) span residues 5-25 (IINL…WQYF), 334-354 (AIDF…MNFF), 357-377 (YVGN…LLMF), 431-451 (LPIL…YVTI), 476-496 (LFGL…WPIL), and 522-542 (FMPL…LIYW).

The protein belongs to the OXA1/ALB3/YidC family. Type 1 subfamily. Interacts with the Sec translocase complex via SecD. Specifically interacts with transmembrane segments of nascent integral membrane proteins during membrane integration.

Its subcellular location is the cell inner membrane. Its function is as follows. Required for the insertion and/or proper folding and/or complex formation of integral membrane proteins into the membrane. Involved in integration of membrane proteins that insert both dependently and independently of the Sec translocase complex, as well as at least some lipoproteins. Aids folding of multispanning membrane proteins. This is Membrane protein insertase YidC from Rickettsia rickettsii (strain Sheila Smith).